Here is a 216-residue protein sequence, read N- to C-terminus: Large ribosomal subunit protein uL24m (216 aa).

The transit peptide at 1 to 9 (MRLSALLAL) directs the protein to the mitochondrion. S24 carries the phosphoserine modification. The 34-residue stretch at 56–89 (LFCGDMVEILEGKDAGKQGKVVQVVRQRNWVVLE) folds into the KOW domain.

It belongs to the universal ribosomal protein uL24 family. In terms of assembly, component of the mitochondrial ribosome large subunit (39S) which comprises a 16S rRNA and about 50 distinct proteins.

The protein localises to the mitochondrion. The chain is Large ribosomal subunit protein uL24m (Mrpl24) from Mus musculus (Mouse).